Here is a 561-residue protein sequence, read N- to C-terminus: MRPSTDTMEADTAATHRNFITKVDVPDHAHYTVAFFVSVIGTLGVTGNALVQFAFYSNKKLRNLPNYFIMNQAASDFLMAFTQSPFFFINCLNREWIFGELGCKLYAFLGALFGITSMINLLAISLDRYMVITRPLEAMKWNSKRRTTIAILLVWLYSLAWSLAPLVGWSSYIPEGLRTSCTWDYVTYTASNRSYTMMLCCFVFFIPLAIISYCYLFMFLAIRKTSRDVERLGIQVRKSTIIRQKSIRTEWKLAKIAFVVIVVYVLSWSPYACVTMISWSGHANILSPYSKTVPAVIAKASTIYNPFIYAIIHQKYRKTLADKVPCLRFLAPNKRKDCTSSSFSGSSYRDSVISRTSTAIRRQSTAASRHASASKTAAGASSYSSSDRVFGDVEMDPIDWRSGASFRRHSSRGSTRRDRLLKKQQMERTNKSAAHKQPSPSTKMSATHCKNKTVSSSVNMAAAPPQLVLIRKRSQSLTNGLSDAGKKTTVANGTPGNHKSKSADLHFRNLPALDQALNVPRIIVISPTSEDCLVKHESSFTDDGSVGTVVDEDSLEDNDVV.

Over 1–34 the chain is Extracellular; that stretch reads MRPSTDTMEADTAATHRNFITKVDVPDHAHYTVA. A helical membrane pass occupies residues 35-55; the sequence is FFVSVIGTLGVTGNALVQFAF. The Cytoplasmic portion of the chain corresponds to 56 to 68; it reads YSNKKLRNLPNYF. Residues 69 to 89 traverse the membrane as a helical segment; that stretch reads IMNQAASDFLMAFTQSPFFFI. At 90-104 the chain is on the extracellular side; sequence NCLNREWIFGELGCK. Residues C103 and C181 are joined by a disulfide bond. The chain crosses the membrane as a helical span at residues 105 to 125; sequence LYAFLGALFGITSMINLLAIS. The Cytoplasmic portion of the chain corresponds to 126 to 148; the sequence is LDRYMVITRPLEAMKWNSKRRTT. A helical transmembrane segment spans residues 149 to 169; sequence IAILLVWLYSLAWSLAPLVGW. At 170–201 the chain is on the extracellular side; the sequence is SSYIPEGLRTSCTWDYVTYTASNRSYTMMLCC. N192 carries an N-linked (GlcNAc...) asparagine glycan. Residues 202 to 222 traverse the membrane as a helical segment; it reads FVFFIPLAIISYCYLFMFLAI. Residues 223-255 lie on the Cytoplasmic side of the membrane; that stretch reads RKTSRDVERLGIQVRKSTIIRQKSIRTEWKLAK. The helical transmembrane segment at 256 to 276 threads the bilayer; the sequence is IAFVVIVVYVLSWSPYACVTM. The Extracellular portion of the chain corresponds to 277–291; it reads ISWSGHANILSPYSK. Residues 292-312 form a helical membrane-spanning segment; sequence TVPAVIAKASTIYNPFIYAII. K299 is modified (N6-(retinylidene)lysine). The Cytoplasmic portion of the chain corresponds to 313 to 561; that stretch reads HQKYRKTLAD…EDSLEDNDVV (249 aa). Disordered regions lie at residues 359–385, 404–448, 479–503, and 539–561; these read AIRR…SYSS, ASFR…SATH, NGLS…SKSA, and SFTD…NDVV. Residues 371-385 show a composition bias toward low complexity; sequence ASASKTAAGASSYSS. Positions 550 to 561 are enriched in acidic residues; the sequence is VDEDSLEDNDVV.

The protein belongs to the G-protein coupled receptor 1 family. Opsin subfamily. Expressed in retina and brain. Expressed in a subset of retinal horizontal cells as well as a small number of amacrine and retinal ganglion cells. Also expressed in a small population of neurons in the suprachiasmatic nucleus (SNC).

It is found in the cell membrane. Photoreceptor implicated in non-image-forming responses to light. The chain is Melanopsin-A (opn4a) from Gadus morhua (Atlantic cod).